Consider the following 433-residue polypeptide: Serine/threonine-protein phosphatase 2A activator 2 (433 aa).

The segment covering 1 to 10 has biased composition (pro residues); the sequence is MTSQAPPQPA. 2 disordered regions span residues 1–67 and 367–400; these read MTSQ…NWTF and SMSE…GTGW. A compositionally biased stretch (low complexity) spans 11 to 23; it reads SSPGVAAPAAASS. A compositionally biased stretch (pro residues) spans 45 to 59; the sequence is NPTPIPETPALPTPP. A compositionally biased stretch (acidic residues) spans 367–382; sequence SMSEDTGAGDEADVED. Over residues 383–396 the composition is skewed to basic and acidic residues; the sequence is DPHAGHDHTGKAHD.

This sequence belongs to the PTPA-type PPIase family.

The protein resides in the cytoplasm. It carries out the reaction [protein]-peptidylproline (omega=180) = [protein]-peptidylproline (omega=0). PPIases accelerate the folding of proteins. It catalyzes the cis-trans isomerization of proline imidic peptide bonds in oligopeptides. Acts as a regulatory subunit for PP2A-like phosphatases modulating their activity or substrate specificity, probably by inducing a conformational change in the catalytic subunit, a direct target of the PPIase. Can reactivate inactive phosphatase PP2A-phosphatase methylesterase complexes (PP2Ai) in presence of ATP and Mg(2+) by dissociating the inactive form from the complex. The sequence is that of Serine/threonine-protein phosphatase 2A activator 2 (RRD2) from Gibberella zeae (strain ATCC MYA-4620 / CBS 123657 / FGSC 9075 / NRRL 31084 / PH-1) (Wheat head blight fungus).